Reading from the N-terminus, the 214-residue chain is Probable chemoreceptor glutamine deamidase CheD (214 aa).

The protein belongs to the CheD family.

It catalyses the reaction L-glutaminyl-[protein] + H2O = L-glutamyl-[protein] + NH4(+). Functionally, probably deamidates glutamine residues to glutamate on methyl-accepting chemotaxis receptors (MCPs), playing an important role in chemotaxis. In Vibrio vulnificus (strain CMCP6), this protein is Probable chemoreceptor glutamine deamidase CheD.